The following is a 154-amino-acid chain: Transcriptional repressor NrdR (154 aa).

A zinc finger spans residues 3 to 34 (CPFCGANDTKVIDSRLVAEGEQVRRRRECLAC). Residues 49 to 139 (PRLIKQDGSR…VYRRFQDLNE (91 aa)) enclose the ATP-cone domain.

It belongs to the NrdR family. Zn(2+) is required as a cofactor.

Functionally, negatively regulates transcription of bacterial ribonucleotide reductase nrd genes and operons by binding to NrdR-boxes. This is Transcriptional repressor NrdR from Pseudomonas syringae pv. tomato (strain ATCC BAA-871 / DC3000).